The primary structure comprises 409 residues: uncharacterized protein (409 aa).

One can recognise an OBG-type G domain in the interval 5–274 (ILIGFVGKPS…LAKQGFVKYE (270 aa)). Residues 11–18 (GKPSSGKS) and 83–87 (DVAGL) contribute to the GTP site.

The protein belongs to the TRAFAC class OBG-HflX-like GTPase superfamily. OBG GTPase family.

The protein resides in the cytoplasm. Its subcellular location is the nucleus. This is an uncharacterized protein from Schizosaccharomyces pombe (strain 972 / ATCC 24843) (Fission yeast).